A 331-amino-acid chain; its full sequence is UBX domain-containing protein 2B (331 aa).

Composition is skewed to basic and acidic residues over residues 1–16 (MAEG…ERGS) and 37–48 (DEMKCKSSKPDR). The disordered stretch occupies residues 1 to 70 (MAEGGRAEPE…PHRLYSGDHK (70 aa)). Alanine 2 carries the post-translational modification N-acetylalanine. Serine 56 carries the phosphoserine modification. Threonine 59 is subject to Phosphothreonine. Position 66 is a phosphoserine (serine 66). One can recognise an SEP domain in the interval 141–206 (DVQVLLKLWR…MEDHQDQEYI (66 aa)). Residues serine 231, serine 234, and serine 235 each carry the phosphoserine modification. Residues 252 to 329 (DSMPTTKIQI…DILNTVILQQ (78 aa)) form the UBX domain.

The protein belongs to the NSFL1C family. Interacts with VCP. Does not bind ubiquitin.

It is found in the nucleus. The protein resides in the cytoplasm. Its subcellular location is the cytosol. It localises to the endoplasmic reticulum. The protein localises to the golgi apparatus. It is found in the cytoskeleton. The protein resides in the microtubule organizing center. Its subcellular location is the centrosome. Adapter protein required for Golgi and endoplasmic reticulum biogenesis. Involved in Golgi and endoplasmic reticulum maintenance during interphase and in their reassembly at the end of mitosis. The complex formed with VCP has membrane fusion activity; membrane fusion activity requires USO1-GOLGA2 tethering and BET1L. VCPIP1 is also required, but not its deubiquitinating activity. Together with NSFL1C/p47, regulates the centrosomal levels of kinase AURKA/Aurora A during mitotic progression by promoting AURKA removal from centrosomes in prophase. Also, regulates spindle orientation during mitosis. This is UBX domain-containing protein 2B (Ubxn2b) from Mus musculus (Mouse).